Here is a 219-residue protein sequence, read N- to C-terminus: tRNA (guanine-N(7)-)-methyltransferase (219 aa).

The S-adenosyl-L-methionine site is built by glutamate 51, glutamate 76, aspartate 103, and aspartate 125. Aspartate 125 is an active-site residue. Residues lysine 129, aspartate 161, and 199-202 each bind substrate; that span reads TRYE.

This sequence belongs to the class I-like SAM-binding methyltransferase superfamily. TrmB family.

The catalysed reaction is guanosine(46) in tRNA + S-adenosyl-L-methionine = N(7)-methylguanosine(46) in tRNA + S-adenosyl-L-homocysteine. Its pathway is tRNA modification; N(7)-methylguanine-tRNA biosynthesis. In terms of biological role, catalyzes the formation of N(7)-methylguanine at position 46 (m7G46) in tRNA. In Hyphomonas neptunium (strain ATCC 15444), this protein is tRNA (guanine-N(7)-)-methyltransferase.